Here is a 436-residue protein sequence, read N- to C-terminus: Trigger factor (436 aa).

The region spanning 163 to 248 (GDRVTIDFEG…VKKIEAAHLP (86 aa)) is the PPIase FKBP-type domain.

Belongs to the FKBP-type PPIase family. Tig subfamily.

Its subcellular location is the cytoplasm. The catalysed reaction is [protein]-peptidylproline (omega=180) = [protein]-peptidylproline (omega=0). Functionally, involved in protein export. Acts as a chaperone by maintaining the newly synthesized protein in an open conformation. Functions as a peptidyl-prolyl cis-trans isomerase. The sequence is that of Trigger factor from Polaromonas naphthalenivorans (strain CJ2).